A 538-amino-acid chain; its full sequence is C-22 sterol desaturase ERG5 (538 aa).

A helical membrane pass occupies residues 46–66 (LKIFATLICILLVWDQVAYQI). Residues Lys-164 and Lys-198 each participate in a glycyl lysine isopeptide (Lys-Gly) (interchain with G-Cter in ubiquitin) cross-link. Cys-476 is a heme binding site.

Belongs to the cytochrome P450 family. As to quaternary structure, interacts with ERG28. The cofactor is heme.

It localises to the endoplasmic reticulum membrane. The enzyme catalyses 5-dehydroepisterol + NADPH + O2 + H(+) = ergosta-5,7,22,24(28)-tetraen-3beta-ol + NADP(+) + 2 H2O. The protein operates within steroid metabolism; ergosterol biosynthesis; ergosterol from zymosterol: step 4/5. Functionally, C-22 sterol desaturase; part of the third module of ergosterol biosynthesis pathway that includes the late steps of the pathway. ERG5 converts 5-dehydroepisterol into ergosta-5,7,22,24(28)-tetraen-3beta-ol by forming the C-22(23) double bond in the sterol side chain. The third module or late pathway involves the ergosterol synthesis itself through consecutive reactions that mainly occur in the endoplasmic reticulum (ER) membrane. Firstly, the squalene synthase ERG9 catalyzes the condensation of 2 farnesyl pyrophosphate moieties to form squalene, which is the precursor of all steroids. Squalene synthase is crucial for balancing the incorporation of farnesyl diphosphate (FPP) into sterol and nonsterol isoprene synthesis. Secondly, the squalene epoxidase ERG1 catalyzes the stereospecific oxidation of squalene to (S)-2,3-epoxysqualene, which is considered to be a rate-limiting enzyme in steroid biosynthesis. Then, the lanosterol synthase ERG7 catalyzes the cyclization of (S)-2,3 oxidosqualene to lanosterol, a reaction that forms the sterol core. In the next steps, lanosterol is transformed to zymosterol through a complex process involving various demethylation, reduction and desaturation reactions. The lanosterol 14-alpha-demethylase ERG11 (also known as CYP51) catalyzes C14-demethylation of lanosterol to produce 4,4'-dimethyl cholesta-8,14,24-triene-3-beta-ol, which is critical for ergosterol biosynthesis. The C-14 reductase ERG24 reduces the C14=C15 double bond of 4,4-dimethyl-cholesta-8,14,24-trienol to produce 4,4-dimethyl-cholesta-8,24-dienol. 4,4-dimethyl-cholesta-8,24-dienol is substrate of the C-4 demethylation complex ERG25-ERG26-ERG27 in which ERG25 catalyzes the three-step monooxygenation required for the demethylation of 4,4-dimethyl and 4alpha-methylsterols, ERG26 catalyzes the oxidative decarboxylation that results in a reduction of the 3-beta-hydroxy group at the C-3 carbon to an oxo group, and ERG27 is responsible for the reduction of the keto group on the C-3. ERG28 has a role as a scaffold to help anchor ERG25, ERG26 and ERG27 to the endoplasmic reticulum and ERG29 regulates the activity of the iron-containing C4-methylsterol oxidase ERG25. Then, the sterol 24-C-methyltransferase ERG6 catalyzes the methyl transfer from S-adenosyl-methionine to the C-24 of zymosterol to form fecosterol. The C-8 sterol isomerase ERG2 catalyzes the reaction which results in unsaturation at C-7 in the B ring of sterols and thus converts fecosterol to episterol. The sterol-C5-desaturase ERG3 then catalyzes the introduction of a C-5 double bond in the B ring to produce 5-dehydroepisterol. The C-22 sterol desaturase ERG5 further converts 5-dehydroepisterol into ergosta-5,7,22,24(28)-tetraen-3beta-ol by forming the C-22(23) double bond in the sterol side chain. Finally, ergosta-5,7,22,24(28)-tetraen-3beta-ol is substrate of the C-24(28) sterol reductase ERG4 to produce ergosterol. This chain is C-22 sterol desaturase ERG5, found in Saccharomyces cerevisiae (strain ATCC 204508 / S288c) (Baker's yeast).